The chain runs to 475 residues: Adenosylhomocysteinase (475 aa).

Residues threonine 60, aspartate 133, and glutamate 198 each contribute to the substrate site. Residue 199–201 (TTT) coordinates NAD(+). Lysine 228 and aspartate 232 together coordinate substrate. NAD(+) contacts are provided by residues asparagine 233, 262–267 (GYGDVG), glutamate 285, asparagine 320, 341–343 (IGH), and asparagine 389.

This sequence belongs to the adenosylhomocysteinase family. The cofactor is NAD(+).

The protein resides in the cytoplasm. It carries out the reaction S-adenosyl-L-homocysteine + H2O = L-homocysteine + adenosine. The protein operates within amino-acid biosynthesis; L-homocysteine biosynthesis; L-homocysteine from S-adenosyl-L-homocysteine: step 1/1. Its function is as follows. May play a key role in the regulation of the intracellular concentration of adenosylhomocysteine. The protein is Adenosylhomocysteinase of Syntrophotalea carbinolica (strain DSM 2380 / NBRC 103641 / GraBd1) (Pelobacter carbinolicus).